A 61-amino-acid polypeptide reads, in one-letter code: Large ribosomal subunit protein eL37 (61 aa).

The Zn(2+) site is built by Cys-20, Cys-23, Cys-35, and Cys-38. A C4-type zinc finger spans residues 20–38; that stretch reads CPRCGRHSYNIVKGYCAAC.

The protein belongs to the eukaryotic ribosomal protein eL37 family. The cofactor is Zn(2+).

In terms of biological role, binds to the 23S rRNA. The polypeptide is Large ribosomal subunit protein eL37 (Caldivirga maquilingensis (strain ATCC 700844 / DSM 13496 / JCM 10307 / IC-167)).